Consider the following 536-residue polypeptide: Cytochrome P450 monooxygenase phqM (536 aa).

Residue Cys-464 participates in heme binding.

This sequence belongs to the cytochrome P450 family. Heme serves as cofactor.

It functions in the pathway alkaloid biosynthesis. Its function is as follows. Cytochrome P450 monooxygenase; part of the gene cluster that mediates the biosynthesis of paraherquamide, a fungal indole alkaloid that belongs to a family of natural products containing a characteristic bicyclo[2.2.2]diazaoctane core. The first steps in the biosynthesis of paraherquamide is the production of the beta-methyl-proline precursor from L-isoleucine. They require oxidation of a terminally hydroxylated L-isoleucine to the corresponding aldehyde by enzymes which have still to be identified. Spontaneous cyclization and dehydration would yield the 4-methyl pyrolline-5-carboxylic acid, which is then reduced by the pyrroline-5-carboxylate reductase phqD leading to the beta-methyl-proline precursor. The next step of paraherquamide biosynthesis involves coupling of beta-methyl-proline and L-tryptophan by the bimodular NRPS phqB, to produce a monooxopiperazine intermediate. The reductase (R) domain of phqB utilizes NADPH for hydride transfer to reduce the thioester bond of the T domain-tethered linear dipeptide to a hemithioaminal intermediate, which spontaneously cleaves the C-S bond to release the aldehyde product. This compound undergoes spontaneous cyclization and dehydration to give a dienamine which is reverse prenylated at C-2 by the reverse prenyltransferase phqJ. The other prenyltransferase present in the cluster, phqI may be a redundant gene in the pathway. During biosynthetic assembly, the key step to produce the polycyclic core is catalyzed by the bifunctional reductase and intramolecular [4+2] Diels-Alderase, phqE, resulting in formation of the [2.2.2] diazaoctane intermediate preparaherquamide. Following formation of preparaherquamide, an indole 2,3-epoxidation-initiated pinacol-like rearrangement is catalyzed by the phqK FAD-dependent monooxygenase. The prenyltransferase phqA, the cytochrome P450 monooxygenase phqL, and the FAD-linked oxidoreductase phqH (or the cytochrome P450 monooxygenase phqM), are proposed to be involved in the formation of the pyran ring. The FAD-dependent monooxygenase phqK is likely responsible for generation of the spiro-oxindole, and the N-methylation is likely mediated by the phqN methyltransferase leading to the isolable natural product paraherquamide F. However, the order of these biosynthetic steps has still to be determined. In late-stage paraherquamide biosynthesis, the third P450 monooxygenase, phqO, is probably responsible for the C-14 hydroxylation, transforming paraherquamide F to paraherquamide G, and paraherquamide E to the final product paraherquamide A. The expansion from the 6-membered ring pyran (in paraherquamides F and G) to the 7-membered dioxepin ring (in paraherquamides A and E) represents a poorly understood but intriguing process that probably involves the 2-oxoglutarate-dependent dioxygenase phqC. Finally, the remaining members of the paraherquamide cluster, including phqI as well as phqM (or phqH), do not have a clearly prescribed role and appear to be redundant. The sequence is that of Cytochrome P450 monooxygenase phqM from Penicillium fellutanum.